The primary structure comprises 441 residues: MVIFSTGFNYKTAPVEIREKLAITENNYGLILEKLNSIEDIYEICVISTCNRVELYGVSNDNIEKVKEEILRILSQYSTVPVNTLKDYLFFYTNKEAIRHIFRVSSSLDSMVIGEPQIVCQFKDSFTKAKEYKAVRHILTRLFDKALNVSKKIRTSTGISRRAVSISYAAVLLAKKIFGDLKDKNVLIIGAGEMAELAAKHLHSLNVKHIFVSNRTFEKAVELADKFSGSAIRFEKIQEFLPEADIIIVSTGAKEPILKKEDVKRAIKSRKDPLFIIDISVPRNVEESVNELEGVYLYNIDDLKQVVNSNLEERKIEAQRAEFIIDEEVEKFVKWLNALKVSPIISSVRDYADKLRQQQLEKLFKQMPYLNEKERETIDLAMRSLINKLLHRPTMYIKDKAAKEGNTEVVKIFEDMFSSKWDFRKKGKNLEEIEDIVREEQ.

Substrate is bound by residues 49-52 (TCNR), Ser110, 115-117 (EPQ), and Gln121. Residue Cys50 is the Nucleophile of the active site. Residue 190–195 (GAGEMA) participates in NADP(+) binding.

This sequence belongs to the glutamyl-tRNA reductase family. Homodimer.

The enzyme catalyses (S)-4-amino-5-oxopentanoate + tRNA(Glu) + NADP(+) = L-glutamyl-tRNA(Glu) + NADPH + H(+). The protein operates within porphyrin-containing compound metabolism; protoporphyrin-IX biosynthesis; 5-aminolevulinate from L-glutamyl-tRNA(Glu): step 1/2. Functionally, catalyzes the NADPH-dependent reduction of glutamyl-tRNA(Glu) to glutamate 1-semialdehyde (GSA). The chain is Glutamyl-tRNA reductase from Sulfurihydrogenibium sp. (strain YO3AOP1).